The primary structure comprises 103 residues: Serine rich endogenous peptide 9 (103 aa).

An N-terminal signal peptide occupies residues 1 to 25 (MENIFFSKLTQVFIVALLCIFIYRT). Positions 54 to 103 (IYVKPPPLKSKDSNQKGKRGETYYKPNSEIGTGPSHSGHGGSSIEHVSSP) are disordered. Positions 62-75 (KSKDSNQKGKRGET) are enriched in basic and acidic residues. The SCOOP motif signature appears at 82 to 96 (EIGTGPSHSGHGGSS). A compositionally biased stretch (low complexity) spans 84 to 103 (GTGPSHSGHGGSSIEHVSSP). The short motif at 88-90 (SHS) is the SxS motif essential for MIK2 binding element.

It belongs to the serine rich endogenous peptide (SCOOP) phytocytokine family. Interacts with MIK2 (via extracellular leucine-rich repeat domain); this interaction triggers the formation of complex between MIK2 and the BAK1/SERK3 and SERK4 coreceptors, and subsequent BAK1 activation by phosphorylation. As to expression, mostly expressed in seedlings shoots and roots, and, to a lower extent, in leaves, but barely in flowers.

The protein resides in the cell membrane. It localises to the secreted. Its subcellular location is the extracellular space. It is found in the apoplast. Brassicaceae-specific phytocytokine (plant endogenous peptide released into the apoplast) perceived by MIK2 in a BAK1/SERK3 and SERK4 coreceptors-dependent manner, that modulates various physiological and antimicrobial processes including growth prevention and reactive oxygen species (ROS) response regulation. This chain is Serine rich endogenous peptide 9, found in Arabidopsis thaliana (Mouse-ear cress).